The following is a 693-amino-acid chain: Cyclin-dependent kinase G-1 (693 aa).

Residues 1–10 (MAAGSHGGYR) show a composition bias toward gly residues. Disordered regions lie at residues 1-148 (MAAG…ARDP) and 236-308 (KKKK…DDYP). A compositionally biased stretch (basic and acidic residues) spans 13 to 24 (EVAREREHDVGV). The segment covering 26-39 (RRSKEHYHHRHPSR) has biased composition (basic residues). Basic and acidic residues-rich tracts occupy residues 40 to 54 (HRDS…RSGG), 75 to 87 (RPSE…REPG), and 97 to 122 (RSGE…EEAK). Residues 268 to 284 (SVRSSSRSSDSGVLQGS) show a composition bias toward low complexity. Over residues 287–304 (RDLEVEKGDNIDVEKAAD) the composition is skewed to basic and acidic residues. The Protein kinase domain maps to 349–640 (FERLNTINEG…AEDALNHEWF (292 aa)). Residues 355-363 (INEGTYGVV) and Lys-378 contribute to the ATP site. A Phosphothreonine modification is found at Thr-359. Position 360 is a phosphotyrosine (Tyr-360). Asp-473 serves as the catalytic Proton acceptor. Ser-500 carries the phosphoserine modification. A Phosphothreonine modification is found at Thr-506. Positions 664-693 (RFKKHMKSPDPLEEQWMKEQGNNGDRGLFG) are disordered.

This sequence belongs to the protein kinase superfamily. CMGC Ser/Thr protein kinase family. CDC2/CDKX subfamily.

The enzyme catalyses L-seryl-[protein] + ATP = O-phospho-L-seryl-[protein] + ADP + H(+). The catalysed reaction is L-threonyl-[protein] + ATP = O-phospho-L-threonyl-[protein] + ADP + H(+). It carries out the reaction [DNA-directed RNA polymerase] + ATP = phospho-[DNA-directed RNA polymerase] + ADP + H(+). This chain is Cyclin-dependent kinase G-1 (CDKG-1), found in Oryza sativa subsp. indica (Rice).